The sequence spans 122 residues: FMN-binding protein (122 aa).

Monomer and homodimer. FMN is required as a cofactor.

It is found in the cytoplasm. In terms of biological role, functions as a redox protein with a potential of -325 mV. This Nitratidesulfovibrio vulgaris (strain DSM 19637 / Miyazaki F) (Desulfovibrio vulgaris) protein is FMN-binding protein.